Here is a 4857-residue protein sequence, read N- to C-terminus: Dual E2 ubiquitin-conjugating enzyme/E3 ubiquitin-protein ligase BIRC6 (4857 aa).

2 WD repeats span residues 68-106 and 107-136; these read DGLH…QASA and LSAK…AVGC. A BIR repeat occupies 268–377; it reads PELGVGPGRS…LSVTLATSPA (110 aa). Zn(2+) is bound by residues Cys-328, Cys-331, His-348, and Cys-355. The WD 3 repeat unit spans residues 379–426; that stretch reads FPCTDGTDRISCFGSGSCPHFLAAATKRGKICIWDVSKLMKVHLKFEI. 2 disordered regions span residues 465–498 and 579–618; these read DIPK…TSQK and ATSP…NSEL. The span at 472–482 shows a compositional bias: acidic residues; it reads DSDDLLEDSDS. Phosphoserine occurs at positions 473, 480, 482, 581, and 590. WD repeat units follow at residues 501-720, 730-850, 851-927, and 928-966; these read MEVS…VQCL, NLCI…QHIK, DPQD…AKVE, and PPKK…FLQI. Residues 579–588 are compositionally biased toward polar residues; it reads ATSPISSNSH. Residues 595-618 are compositionally biased toward polar residues; that stretch reads SRTQGESISEQGSTDNESCTNSEL. Disordered regions lie at residues 984-1004 and 1053-1073; these read LSKG…PSSP and QQQR…AAQH. The span at 992–1004 shows a compositional bias: polar residues; sequence SEGSKPLSNPSSP. Residues 1056 to 1065 show a composition bias toward basic residues; it reads RRHPQHLHQQ. A Phosphothreonine modification is found at Thr-1710. 2 positions are modified to phosphoserine: Ser-2222 and Ser-2955. The disordered stretch occupies residues 2945 to 2973; it reads SVTTNTTDSVSDEEKVSGGKDGNGSSTSV. Residues 3189 to 3193 are HRRAR loop; important for DIABLO/SMAC and HTRA2 binding; that stretch reads HRRAR. One can recognise a Ubiquitin-like domain in the interval 3819–4068; sequence DEKVTMFLQS…ESLLETCPIQ (250 aa). A disordered region spans residues 3923–3949; that stretch reads QSKRAVSATPPRPPSRRGRTIPDKIGS. Thr-3931 is subject to Phosphothreonine. At Ser-4023 the chain carries Phosphoserine. The segment at 4260–4283 is disordered; sequence RVPNSSVNQTEPQVSSSHNPTSTE. Positions 4261-4283 are enriched in polar residues; the sequence is VPNSSVNQTEPQVSSSHNPTSTE. Positions 4573–4740 constitute a UBC core domain; sequence ARARRLAQEA…IRQATVKWAM (168 aa). The active-site Glycyl thioester intermediate is Cys-4666. Residues 4835-4857 are disordered; sequence EETLMHDQVKPSSSKELPSDFQL. Residues 4844 to 4857 are compositionally biased toward polar residues; it reads KPSSSKELPSDFQL.

This sequence belongs to the BIRC6 family. Homodimer; antiparallel. Interacts with RNF41. Interacts with DIABLO/SMAC, likely with higher affinity to SMAC dimer than SMAC monomer; this interaction blocks the substrate-binding site and inhibits the caspase inhibition activity of BIRC6. Interacts with KIF23/MKLP1, USP8/UBPY, BIRC5/survivin, MAP2K1/MEK1, RAB8A/RAB8, RAB11A/RAB11, PLK1, EXOC3/SEC6 and EXOC4/SEC8. Ubiquitinated; mediated by RNF41 E3 ligase and leads to proteasomal degradation, impairing inhibition of apoptosis. Deubiquitinated by USP8/UBPY. Autoubiquitinated; mediated by E1 ubiquitin activating enzyme UBA6. In terms of processing, proteolytically cleaved. Acts as substrate for CASP3, CASP6, CASP7, CASP9 and HTRA2. Expressed in brain cancer cells.

It is found in the golgi apparatus. It localises to the trans-Golgi network membrane. The protein localises to the endosome. The protein resides in the cytoplasm. Its subcellular location is the cytoskeleton. It is found in the spindle pole. It localises to the microtubule organizing center. The protein localises to the centrosome. The protein resides in the midbody. Its subcellular location is the midbody ring. It catalyses the reaction S-ubiquitinyl-[E1 ubiquitin-activating enzyme]-L-cysteine + [acceptor protein]-L-lysine = [E1 ubiquitin-activating enzyme]-L-cysteine + N(6)-monoubiquitinyl-[acceptor protein]-L-lysine.. Inhibited by DIABLO/SMAC, which competes for the substrate-binding sites on BIRC6. BIRC6 inhibits caspases and protease by ubiquitination but BIRC6 itself is subjected to protease cleavage by CASP3, CASP6, CASP7, CASP9 and HTRA2 by protease cleavage. Functionally, anti-apoptotic protein known as inhibitor of apoptosis (IAP) which can regulate cell death by controlling caspases and by acting as an E3 ubiquitin-protein ligase. Unlike most IAPs, does not contain a RING domain and it is not a RING-type E3 ligase. Instead acts as a dual E2/E3 enzyme that combines ubiquitin conjugating (E2) and ubiquitin ligase (E3) activities in a single polypeptide. Ubiquitination is mediated by a non-canonical E1 ubiquitin activating enzyme UBA6. Ubiquitinates CASP3, CASP7 and CASP9 and inhibits their caspase activity; also ubiquitinates their procaspases but to a weaker extent. Ubiquitinates pro-apoptotic factors DIABLO/SMAC and HTRA2. DIABLO/SMAC antagonizes the caspase inhibition activity of BIRC6 by competing for the same binding sites as the caspases. Ubiquitinates the autophagy protein MAP1LC3B; this activity is also inhibited by DIABLO/SMAC. Important regulator for the final stages of cytokinesis. Crucial for normal vesicle targeting to the site of abscission, but also for the integrity of the midbody and the midbody ring, and its striking ubiquitin modification. This chain is Dual E2 ubiquitin-conjugating enzyme/E3 ubiquitin-protein ligase BIRC6 (BIRC6), found in Homo sapiens (Human).